A 129-amino-acid polypeptide reads, in one-letter code: NADH-quinone oxidoreductase subunit A (129 aa).

3 consecutive transmembrane segments (helical) span residues 14–34 (LAIH…VAAV), 67–87 (FLIA…FAWA), and 97–117 (GLIE…YLWI).

The protein belongs to the complex I subunit 3 family. As to quaternary structure, NDH-1 is composed of 14 different subunits. Subunits NuoA, H, J, K, L, M, N constitute the membrane sector of the complex.

The protein resides in the cell inner membrane. It carries out the reaction a quinone + NADH + 5 H(+)(in) = a quinol + NAD(+) + 4 H(+)(out). Its function is as follows. NDH-1 shuttles electrons from NADH, via FMN and iron-sulfur (Fe-S) centers, to quinones in the respiratory chain. The immediate electron acceptor for the enzyme in this species is believed to be ubiquinone. Couples the redox reaction to proton translocation (for every two electrons transferred, four hydrogen ions are translocated across the cytoplasmic membrane), and thus conserves the redox energy in a proton gradient. The protein is NADH-quinone oxidoreductase subunit A of Rhodopseudomonas palustris (strain BisB18).